The primary structure comprises 124 residues: Small ribosomal subunit protein uS12 (124 aa).

Asp89 bears the 3-methylthioaspartic acid mark. The tract at residues 104–124 (ATGVKDRKQGRSKYGAKRPKE) is disordered. Basic residues predominate over residues 113-124 (GRSKYGAKRPKE).

The protein belongs to the universal ribosomal protein uS12 family. In terms of assembly, part of the 30S ribosomal subunit. Contacts proteins S8 and S17. May interact with IF1 in the 30S initiation complex.

In terms of biological role, with S4 and S5 plays an important role in translational accuracy. Its function is as follows. Interacts with and stabilizes bases of the 16S rRNA that are involved in tRNA selection in the A site and with the mRNA backbone. Located at the interface of the 30S and 50S subunits, it traverses the body of the 30S subunit contacting proteins on the other side and probably holding the rRNA structure together. The combined cluster of proteins S8, S12 and S17 appears to hold together the shoulder and platform of the 30S subunit. This is Small ribosomal subunit protein uS12 from Picosynechococcus sp. (strain ATCC 27264 / PCC 7002 / PR-6) (Agmenellum quadruplicatum).